We begin with the raw amino-acid sequence, 614 residues long: Membrane protein insertase YidC (614 aa).

A helical membrane pass occupies residues 6–26 (IVLLIIFSTSLLFLWDAWIKE). Polar residues-rich tracts occupy residues 34 to 48 (PAIT…STQS) and 60 to 70 (ELTSSQASPDT). The interval 34–87 (PAITQADSSAGSTQSRNDDSLPVPGSELTSSQASPDTNGIPASGGNGDSVTPRL) is disordered. 4 helical membrane passes run 380 to 400 (WGVA…PLSA), 450 to 470 (FPIL…LAAV), 484 to 504 (LSSP…MFVQ), and 524 to 544 (PVAF…YSLV). The segment at 562-614 (TAPSKDTPEPPVSKQVNSSENPETTANSPADSPKQPQTPANNPRKMYKRTRKK) is disordered. A compositionally biased stretch (polar residues) spans 575 to 602 (KQVNSSENPETTANSPADSPKQPQTPAN).

This sequence belongs to the OXA1/ALB3/YidC family. Type 1 subfamily. In terms of assembly, interacts with the Sec translocase complex via SecD. Specifically interacts with transmembrane segments of nascent integral membrane proteins during membrane integration.

The protein localises to the cell inner membrane. Functionally, required for the insertion and/or proper folding and/or complex formation of integral membrane proteins into the membrane. Involved in integration of membrane proteins that insert both dependently and independently of the Sec translocase complex, as well as at least some lipoproteins. Aids folding of multispanning membrane proteins. This is Membrane protein insertase YidC from Nitrosomonas europaea (strain ATCC 19718 / CIP 103999 / KCTC 2705 / NBRC 14298).